The chain runs to 71 residues: uncharacterized protein (71 aa).

This is an uncharacterized protein from Enterobacteria phage T4 (Bacteriophage T4).